Reading from the N-terminus, the 821-residue chain is MEYISKDIEKKWQNFWSENQSFEPSSSKTKEKKYILSMFPYPSGRIHMGHVRNYCIGDAFARHFRKSDFNVLHPIGWDSFGMPAENAAIKHKLHPKKWTYENIDYMRDELKSLGLSFSKNREFATSDELYTKWEQEFIIKMYEAGIIYRKSATVNWCPHDQTVLANEQLEEGCCWRCGTEVVQKEMPGYYIGITKYAQELLDDLEKLKEDWPSQVLTMQENWIGRSEGLEFKFDLSKESRAKLERAFTKYFVFTTRPDTIYGVSYSALAPEHPIVKYIVEKNLLPEKKIKAIKAMQKIPERDRATQEKEGIDLEIEVMHPLTGKTIPVWVANFVLSSYGGGAVMAVPAHDQRDFEFAKKYNLPIKQVIVGPDGIIENQTEAYTAEGRLIESENFTGVTNIEAKKAIIYHFEQNSFGIKKVNYKLRDWGVSRQRYWGAPIPFIHCEKCGLVPEKIENLPVALPEDVEITGEGNPLDTHPTWKHCTCPKCGEKATRETDTLDTFVQSSWYFLRYATDNKKWNEVGISKEDSDYWMDVDQYIGGIEHAILHLLYARFFTKVLRDLGYTNSSEPFKKLLTQGMVLKDGAKMSKSKGNVVDPDLIIDKYGADTARLFILFAAPPTKELEWNDSAVEGAFRFIKKFFERAENVNQNGLDNFKSIDHSALSKEEKEARKKVYEALLKSNEVFTKTYTFNTLIASCMEALNALQTQKNDSIWAEGYYILTNILEPIIPHACWELSKKLFDLKNFDGKIELKEEVFALESIILAVTVNGKKRCEIEVAPDTSKDEILVKAKIASAKWLENSEILKEIVVPNKLVNFVIKG.

Positions 40 to 50 (PYPSGRIHMGH) match the 'HIGH' region motif. The 'KMSKS' region motif lies at 586 to 590 (KMSKS). Lys589 serves as a coordination point for ATP.

Belongs to the class-I aminoacyl-tRNA synthetase family.

Its subcellular location is the cytoplasm. It catalyses the reaction tRNA(Leu) + L-leucine + ATP = L-leucyl-tRNA(Leu) + AMP + diphosphate. This is Leucine--tRNA ligase from Aliarcobacter butzleri (strain RM4018) (Arcobacter butzleri).